Here is a 326-residue protein sequence, read N- to C-terminus: (+)-T-muurolol synthase ((2E,6E)-farnesyl diphosphate cyclizing) (326 aa).

Mg(2+) contacts are provided by Asp81 and Asp85. The DDXXD motif motif lies at 81–85; it reads DDQCD. Arg175 serves as a coordination point for substrate. Mg(2+) contacts are provided by Asn221 and Ser225. Lys228 contributes to the substrate binding site. Glu229 lines the Mg(2+) pocket. Residue 309–310 participates in substrate binding; that stretch reads RY.

This sequence belongs to the terpene synthase family. Requires Mg(2+) as cofactor.

The enzyme catalyses (2E,6E)-farnesyl diphosphate + H2O = (+)-T-muurolol + diphosphate. The protein operates within secondary metabolite biosynthesis; terpenoid biosynthesis. Catalyzes the conversion of (2E,6E)-farnesyl diphosphate (FPP) into (+)-T-muurolol via a 1,10-cyclization, which requires isomerization of FPP to nerolidyl diphosphate (NPP) and then abstraction of the pyrophosphate from intermediate NPP leading to a (E,Z)-germacradienyl (helminthogermacradienyl) cation. This Roseiflexus castenholzii (strain DSM 13941 / HLO8) protein is (+)-T-muurolol synthase ((2E,6E)-farnesyl diphosphate cyclizing).